The following is a 345-amino-acid chain: uncharacterized protein (345 aa).

It is found in the cell membrane. Its function is as follows. Involved in potassium and divalent cation transport. Enhances the transport activity of the cation/potassium transporter CzcD. This is an uncharacterized protein from Bacillus velezensis (strain DSM 23117 / BGSC 10A6 / LMG 26770 / FZB42) (Bacillus amyloliquefaciens subsp. plantarum).